The following is a 62-amino-acid chain: Cytotoxin homolog (62 aa).

Disulfide bonds link C3–C22, C15–C40, C44–C55, and C56–C61.

The protein belongs to the three-finger toxin family. Short-chain subfamily. Orphan group XV sub-subfamily. Expressed by the venom gland.

It localises to the secreted. The protein localises to the target cell membrane. Its function is as follows. Has low cytotoxic activity. In Naja kaouthia (Monocled cobra), this protein is Cytotoxin homolog.